Reading from the N-terminus, the 255-residue chain is Phosphoribosylformylglycinamidine synthase subunit PurQ (255 aa).

In terms of domain architecture, Glutamine amidotransferase type-1 spans 6 to 255; the sequence is TLILRTPGTN…TNAVKWARQV (250 aa). Cys-96 (nucleophile) is an active-site residue. Residues His-217 and Glu-219 contribute to the active site.

In terms of assembly, part of the FGAM synthase complex composed of 1 PurL, 1 PurQ and 2 PurS subunits.

The protein localises to the cytoplasm. It catalyses the reaction N(2)-formyl-N(1)-(5-phospho-beta-D-ribosyl)glycinamide + L-glutamine + ATP + H2O = 2-formamido-N(1)-(5-O-phospho-beta-D-ribosyl)acetamidine + L-glutamate + ADP + phosphate + H(+). The enzyme catalyses L-glutamine + H2O = L-glutamate + NH4(+). Its pathway is purine metabolism; IMP biosynthesis via de novo pathway; 5-amino-1-(5-phospho-D-ribosyl)imidazole from N(2)-formyl-N(1)-(5-phospho-D-ribosyl)glycinamide: step 1/2. Its function is as follows. Part of the phosphoribosylformylglycinamidine synthase complex involved in the purines biosynthetic pathway. Catalyzes the ATP-dependent conversion of formylglycinamide ribonucleotide (FGAR) and glutamine to yield formylglycinamidine ribonucleotide (FGAM) and glutamate. The FGAM synthase complex is composed of three subunits. PurQ produces an ammonia molecule by converting glutamine to glutamate. PurL transfers the ammonia molecule to FGAR to form FGAM in an ATP-dependent manner. PurS interacts with PurQ and PurL and is thought to assist in the transfer of the ammonia molecule from PurQ to PurL. This is Phosphoribosylformylglycinamidine synthase subunit PurQ from Dehalococcoides mccartyi (strain ATCC BAA-2266 / KCTC 15142 / 195) (Dehalococcoides ethenogenes (strain 195)).